The sequence spans 157 residues: Arginine repressor (157 aa).

This sequence belongs to the ArgR family.

The protein localises to the cytoplasm. Its pathway is amino-acid biosynthesis; L-arginine biosynthesis [regulation]. Regulates arginine biosynthesis genes. The chain is Arginine repressor from Deinococcus radiodurans (strain ATCC 13939 / DSM 20539 / JCM 16871 / CCUG 27074 / LMG 4051 / NBRC 15346 / NCIMB 9279 / VKM B-1422 / R1).